A 1214-amino-acid chain; its full sequence is Ubiquitin carboxyl-terminal hydrolase 36 (1214 aa).

The disordered stretch occupies residues 124-169 (AVGSNGHDNNTVNGGTVNGNRKQTVDSGQSNQNSSANPNELPKPKR). The segment covering 132-143 (NNTVNGGTVNGN) has biased composition (low complexity). Residues 144-161 (RKQTVDSGQSNQNSSANP) are compositionally biased toward polar residues. Residues 192–502 (AGMLNVGNTC…NAYIMFYELD (311 aa)) form the USP domain. Cys-201 serves as the catalytic Nucleophile. His-461 acts as the Proton acceptor in catalysis. The segment covering 509–523 (SSTINNNSSSSSNNS) has biased composition (low complexity). The tract at residues 509 to 532 (SSTINNNSSSSSNNSVAPKLNGLR) is disordered. 2 positions are modified to phosphoserine: Ser-553 and Ser-555. 5 disordered regions span residues 631 to 819 (GEAA…KQKT), 836 to 964 (HRIA…ASKS), 977 to 1001 (QKLL…SESV), 1048 to 1161 (HGDT…PNFQ), and 1176 to 1214 (KFQQ…QQQS). The span at 633–651 (AAPNANTNANANKSSCNNN) shows a compositional bias: low complexity. Acidic residues predominate over residues 666–685 (SDEDEDEDDSDDDDDDDDDD). Thr-717 carries the post-translational modification Phosphothreonine. Residues Ser-727 and Ser-729 each carry the phosphoserine modification. Composition is skewed to low complexity over residues 735 to 751 (QQQQ…PQQL) and 785 to 816 (KTNG…NSSK). Polar residues predominate over residues 856–868 (EQVQTEQGTKKLN). Residues 869–878 (SASSASASKS) are compositionally biased toward low complexity. Ser-891 is modified (phosphoserine). Phosphothreonine is present on Thr-894. Ser-897 is subject to Phosphoserine. The span at 915 to 942 (DDDDEEDEEEDDVEADADQEDDDDEVVV) shows a compositional bias: acidic residues. Thr-951 carries the post-translational modification Phosphothreonine. The segment covering 983-1001 (SAKSAATTRPGNGYQSESV) has biased composition (polar residues). The span at 1058–1076 (NSSSNNSSNINSNSNSNSN) shows a compositional bias: low complexity. The span at 1089 to 1098 (EAREQRKRDA) shows a compositional bias: basic and acidic residues. Low complexity-rich tracts occupy residues 1178 to 1188 (QQQRALQRHLA) and 1197 to 1214 (QQQS…QQQS).

Belongs to the peptidase C19 family. As to quaternary structure, interacts with atms/PAF1, but not with CycT.

The protein resides in the nucleus. The protein localises to the nucleolus. It carries out the reaction Thiol-dependent hydrolysis of ester, thioester, amide, peptide and isopeptide bonds formed by the C-terminal Gly of ubiquitin (a 76-residue protein attached to proteins as an intracellular targeting signal).. Its function is as follows. Required for maintaining multiple types of adult stem cells, including male and female germline, epithelial follicle cell and intestinal stem cells. May function as a transcriptional repressor by continually deubiquiting histone H2B at the promoters of genes critical for cellular differentiation, thereby preventing histone H3 'Lys-4' trimethylation (H3K4). Controls selective autophagy activation by ubiquitinated proteins. The chain is Ubiquitin carboxyl-terminal hydrolase 36 (Usp36) from Drosophila virilis (Fruit fly).